Here is a 142-residue protein sequence, read N- to C-terminus: Small ribosomal subunit protein uS12 (142 aa).

The interval 1–22 (MPTFNQLVRKGRKAAKKKSTAP) is disordered. Positions 9–19 (RKGRKAAKKKS) are enriched in basic residues. The residue at position 102 (D102) is a 3-methylthioaspartic acid.

This sequence belongs to the universal ribosomal protein uS12 family. Part of the 30S ribosomal subunit. Contacts proteins S8 and S17. May interact with IF1 in the 30S initiation complex.

With S4 and S5 plays an important role in translational accuracy. In terms of biological role, interacts with and stabilizes bases of the 16S rRNA that are involved in tRNA selection in the A site and with the mRNA backbone. Located at the interface of the 30S and 50S subunits, it traverses the body of the 30S subunit contacting proteins on the other side and probably holding the rRNA structure together. The combined cluster of proteins S8, S12 and S17 appears to hold together the shoulder and platform of the 30S subunit. This chain is Small ribosomal subunit protein uS12, found in Acetivibrio thermocellus (strain ATCC 27405 / DSM 1237 / JCM 9322 / NBRC 103400 / NCIMB 10682 / NRRL B-4536 / VPI 7372) (Clostridium thermocellum).